Consider the following 483-residue polypeptide: Regulatory protein ViaA (483 aa).

It belongs to the ViaA family. As to quaternary structure, homodimer. Interacts with RavA.

It localises to the cytoplasm. Functionally, component of the RavA-ViaA chaperone complex, which may act on the membrane to optimize the function of some of the respiratory chains. ViaA stimulates the ATPase activity of RavA. This is Regulatory protein ViaA from Salmonella agona (strain SL483).